We begin with the raw amino-acid sequence, 379 residues long: Flagellin A (379 aa).

Coiled coils occupy residues 104-129 and 314-341; these read NSASERQALNEESVALQDELNRIAET and QNRLSHSISNLSNIQENVEASKSRIKDT.

It belongs to the bacterial flagellin family. Heteromer of multiple flagellin subunits including FlaA, FlaB, FlaC, FlaD and FlaE.

Its subcellular location is the secreted. It is found in the bacterial flagellum. Flagellin is the subunit protein which polymerizes to form the filaments of bacterial flagella. FlaA is required to form a core or scaffold into which the other flagellins are inserted to provide structural integrity. Essential for flagellar synthesis and motility; important for full virulence. This Vibrio cholerae serotype O1 (strain ATCC 39541 / Classical Ogawa 395 / O395) protein is Flagellin A (flaA).